The primary structure comprises 153 residues: D-aminoacyl-tRNA deacylase (153 aa).

Residues 137 to 138 (GP) carry the Gly-cisPro motif, important for rejection of L-amino acids motif.

The protein belongs to the DTD family. As to quaternary structure, homodimer.

Its subcellular location is the cytoplasm. The catalysed reaction is glycyl-tRNA(Ala) + H2O = tRNA(Ala) + glycine + H(+). The enzyme catalyses a D-aminoacyl-tRNA + H2O = a tRNA + a D-alpha-amino acid + H(+). Its function is as follows. An aminoacyl-tRNA editing enzyme that deacylates mischarged D-aminoacyl-tRNAs. Also deacylates mischarged glycyl-tRNA(Ala), protecting cells against glycine mischarging by AlaRS. Acts via tRNA-based rather than protein-based catalysis; rejects L-amino acids rather than detecting D-amino acids in the active site. By recycling D-aminoacyl-tRNA to D-amino acids and free tRNA molecules, this enzyme counteracts the toxicity associated with the formation of D-aminoacyl-tRNA entities in vivo and helps enforce protein L-homochirality. This is D-aminoacyl-tRNA deacylase from Myxococcus xanthus (strain DK1622).